The sequence spans 462 residues: Cytochrome c biogenesis protein CcsB (462 aa).

3 helical membrane-spanning segments follow: residues 30–50 (LRVA…GTVI), 89–109 (TWWY…CTFR), and 175–195 (IGPI…IWGA).

The protein belongs to the Ccs1/CcsB family. In terms of assembly, may interact with CcsA.

Its subcellular location is the cellular thylakoid membrane. Its function is as follows. Required during biogenesis of c-type cytochromes (cytochrome c6 and cytochrome f) at the step of heme attachment. In Picosynechococcus sp. (strain ATCC 27264 / PCC 7002 / PR-6) (Agmenellum quadruplicatum), this protein is Cytochrome c biogenesis protein CcsB.